We begin with the raw amino-acid sequence, 1042 residues long: Isoleucine--tRNA ligase (1042 aa).

The 'HIGH' region motif lies at 48-58 (PFATGLPHFGH). The 'KMSKS' region signature appears at 594–598 (KMSKS). Lys597 contributes to the ATP binding site.

This sequence belongs to the class-I aminoacyl-tRNA synthetase family. IleS type 2 subfamily. Monomer. The cofactor is Zn(2+).

Its subcellular location is the cytoplasm. The enzyme catalyses tRNA(Ile) + L-isoleucine + ATP = L-isoleucyl-tRNA(Ile) + AMP + diphosphate. Its function is as follows. Catalyzes the attachment of isoleucine to tRNA(Ile). As IleRS can inadvertently accommodate and process structurally similar amino acids such as valine, to avoid such errors it has two additional distinct tRNA(Ile)-dependent editing activities. One activity is designated as 'pretransfer' editing and involves the hydrolysis of activated Val-AMP. The other activity is designated 'posttransfer' editing and involves deacylation of mischarged Val-tRNA(Ile). The protein is Isoleucine--tRNA ligase of Borreliella afzelii (strain PKo) (Borrelia afzelii).